Consider the following 109-residue polypeptide: uncharacterized protein (109 aa).

The signal sequence occupies residues 1–25; sequence MKGIFLVVQLGFSIMVFLFLAAVNW. The helical transmembrane segment at 73–95 threads the bilayer; sequence YPVMSALMIISFLYVLAALFLLI.

The protein resides in the membrane. This is an uncharacterized protein from Bacillus subtilis (strain 168).